The chain runs to 461 residues: Siroheme synthase (461 aa).

A precorrin-2 dehydrogenase /sirohydrochlorin ferrochelatase region spans residues 1-204; it reads MDYFPIFCQL…GDTTQAQQQV (204 aa). NAD(+) contacts are provided by residues 22 to 23 and 43 to 44; these read EV and GR. Residue Ser128 is modified to Phosphoserine. Positions 216-461 are uroporphyrinogen-III C-methyltransferase; the sequence is GEVTLVGAGP…NWFRCEAASA (246 aa). Pro225 is a binding site for S-adenosyl-L-methionine. The active-site Proton acceptor is the Asp248. The Proton donor role is filled by Lys270. Residues 301 to 303, Ile306, 331 to 332, Met382, and Gly411 contribute to the S-adenosyl-L-methionine site; these read GGD and TA.

This sequence in the N-terminal section; belongs to the precorrin-2 dehydrogenase / sirohydrochlorin ferrochelatase family. In the C-terminal section; belongs to the precorrin methyltransferase family.

The enzyme catalyses uroporphyrinogen III + 2 S-adenosyl-L-methionine = precorrin-2 + 2 S-adenosyl-L-homocysteine + H(+). It catalyses the reaction precorrin-2 + NAD(+) = sirohydrochlorin + NADH + 2 H(+). It carries out the reaction siroheme + 2 H(+) = sirohydrochlorin + Fe(2+). It functions in the pathway cofactor biosynthesis; adenosylcobalamin biosynthesis; precorrin-2 from uroporphyrinogen III: step 1/1. Its pathway is cofactor biosynthesis; adenosylcobalamin biosynthesis; sirohydrochlorin from precorrin-2: step 1/1. It participates in porphyrin-containing compound metabolism; siroheme biosynthesis; precorrin-2 from uroporphyrinogen III: step 1/1. The protein operates within porphyrin-containing compound metabolism; siroheme biosynthesis; siroheme from sirohydrochlorin: step 1/1. It functions in the pathway porphyrin-containing compound metabolism; siroheme biosynthesis; sirohydrochlorin from precorrin-2: step 1/1. In terms of biological role, multifunctional enzyme that catalyzes the SAM-dependent methylations of uroporphyrinogen III at position C-2 and C-7 to form precorrin-2 via precorrin-1. Then it catalyzes the NAD-dependent ring dehydrogenation of precorrin-2 to yield sirohydrochlorin. Finally, it catalyzes the ferrochelation of sirohydrochlorin to yield siroheme. This chain is Siroheme synthase, found in Edwardsiella ictaluri (strain 93-146).